The primary structure comprises 464 residues: Trigger factor (464 aa).

Residues 162-243 (GDFISIDLSA…VGTVKERELP (82 aa)) enclose the PPIase FKBP-type domain. Residues 428 to 464 (GASVDTAELFGNGEADTEEAASTDEVASDSAEGEDQK) are disordered.

Belongs to the FKBP-type PPIase family. Tig subfamily.

Its subcellular location is the cytoplasm. The enzyme catalyses [protein]-peptidylproline (omega=180) = [protein]-peptidylproline (omega=0). In terms of biological role, involved in protein export. Acts as a chaperone by maintaining the newly synthesized protein in an open conformation. Functions as a peptidyl-prolyl cis-trans isomerase. The sequence is that of Trigger factor from Rhodococcus opacus (strain B4).